The following is a 248-amino-acid chain: Triosephosphate isomerase (248 aa).

Substrate is bound by residues Asn-10 and Lys-12. The Electrophile role is filled by His-95. Glu-165 serves as the catalytic Proton acceptor.

The protein belongs to the triosephosphate isomerase family. In terms of assembly, homodimer.

It catalyses the reaction D-glyceraldehyde 3-phosphate = dihydroxyacetone phosphate. It participates in carbohydrate biosynthesis; gluconeogenesis. It functions in the pathway carbohydrate degradation; glycolysis; D-glyceraldehyde 3-phosphate from glycerone phosphate: step 1/1. This chain is Triosephosphate isomerase (TPI1), found in Kluyveromyces marxianus (Yeast).